The chain runs to 306 residues: Ornithine carbamoyltransferase (306 aa).

Residues 53-56 (STRT), Gln80, Arg104, and 131-134 (HPCQ) contribute to the carbamoyl phosphate site. Residues Asn162, Asp219, and 223-224 (SM) each bind L-ornithine. Carbamoyl phosphate-binding positions include 259–260 (CL) and Arg287.

It belongs to the aspartate/ornithine carbamoyltransferase superfamily. OTCase family.

The protein resides in the cytoplasm. It catalyses the reaction carbamoyl phosphate + L-ornithine = L-citrulline + phosphate + H(+). It participates in amino-acid degradation; L-arginine degradation via ADI pathway; carbamoyl phosphate from L-arginine: step 2/2. Its function is as follows. Reversibly catalyzes the transfer of the carbamoyl group from carbamoyl phosphate (CP) to the N(epsilon) atom of ornithine (ORN) to produce L-citrulline. The protein is Ornithine carbamoyltransferase of Acinetobacter baumannii (strain AYE).